The primary structure comprises 619 residues: (-)-camphene synthase, chloroplastic (619 aa).

The transit peptide at 1-47 (MALVSVAPLVSMRRSLFSSPYELKSIDKTIPNLVMCRKRMSGTPSIR) directs the protein to the chloroplast. Residues Asp-370, Asp-374, and Asp-522 each contribute to the Mg(2+) site. The DDXXD motif motif lies at 370–374 (DDIYD).

Belongs to the terpene synthase family. Tpsd subfamily. Requires Mg(2+) as cofactor. Mn(2+) serves as cofactor.

It localises to the plastid. It is found in the chloroplast. The enzyme catalyses (2E)-geranyl diphosphate = (1S,4R)-camphene + diphosphate. It catalyses the reaction (2E)-geranyl diphosphate = (1R,5R)-alpha-pinene + diphosphate. The catalysed reaction is (2E)-geranyl diphosphate = tricyclene + diphosphate. It carries out the reaction (2E)-geranyl diphosphate = beta-myrcene + diphosphate. The enzyme catalyses (2E)-geranyl diphosphate = (1S,5S)-beta-pinene + diphosphate. It catalyses the reaction (2E)-geranyl diphosphate = (1S,5S)-alpha-pinene + diphosphate. Its pathway is terpene metabolism; oleoresin biosynthesis. The protein operates within secondary metabolite biosynthesis; terpenoid biosynthesis. In terms of biological role, monoterpene synthase (TPS) involved in the biosynthesis of monoterpene natural products included in conifer oleoresin secretions and volatile emissions; these compounds contribute to biotic and abiotic stress defense against herbivores and pathogens. Catalyzes the conversion of (2E)-geranyl diphosphate (GPP) to (-)-camphene, (+)-alpha-pinene and (-)-alpha-pinene, and, to a lower extent, to tricyclene, myrcene and (-)-beta-pinene. This is (-)-camphene synthase, chloroplastic from Pinus contorta (Shore pine).